Reading from the N-terminus, the 274-residue chain is Diaminopimelate epimerase (274 aa).

Residues N11, Q44, and N64 each contribute to the substrate site. Residue C73 is the Proton donor of the active site. Substrate contacts are provided by residues 74–75 (GN), N157, N190, and 208–209 (ER). C217 acts as the Proton acceptor in catalysis. 218–219 (GS) is a substrate binding site.

This sequence belongs to the diaminopimelate epimerase family. As to quaternary structure, homodimer.

The protein localises to the cytoplasm. The enzyme catalyses (2S,6S)-2,6-diaminopimelate = meso-2,6-diaminopimelate. Its pathway is amino-acid biosynthesis; L-lysine biosynthesis via DAP pathway; DL-2,6-diaminopimelate from LL-2,6-diaminopimelate: step 1/1. Its function is as follows. Catalyzes the stereoinversion of LL-2,6-diaminopimelate (L,L-DAP) to meso-diaminopimelate (meso-DAP), a precursor of L-lysine and an essential component of the bacterial peptidoglycan. In Actinobacillus succinogenes (strain ATCC 55618 / DSM 22257 / CCUG 43843 / 130Z), this protein is Diaminopimelate epimerase.